We begin with the raw amino-acid sequence, 381 residues long: Phthiodiolone/phenolphthiodiolone dimycocerosates ketoreductase (381 aa).

Belongs to the mer family. Phthiodiolone/phenolphthiodiolone dimycocerosates ketoreductase subfamily.

In terms of biological role, catalyzes the reduction of the keto moiety of phthiodiolone dimycocerosates (DIM B) and glycosylated phenolphthiodiolone dimycocerosates to form the intermediate compounds phthiotriol and glycosylated phenolphthiotriol dimycocerosates during phthiocerol dimycocerosates (DIM A) and glycosylated phenolphthiocerol dimycocerosates (PGL) biosynthesis. The sequence is that of Phthiodiolone/phenolphthiodiolone dimycocerosates ketoreductase from Mycobacterium tuberculosis (strain CDC 1551 / Oshkosh).